Reading from the N-terminus, the 237-residue chain is Large ribosomal subunit protein uL1 (237 aa).

The protein belongs to the universal ribosomal protein uL1 family. Part of the 50S ribosomal subunit.

Its function is as follows. Binds directly to 23S rRNA. The L1 stalk is quite mobile in the ribosome, and is involved in E site tRNA release. Functionally, protein L1 is also a translational repressor protein, it controls the translation of the L11 operon by binding to its mRNA. The polypeptide is Large ribosomal subunit protein uL1 (Solibacter usitatus (strain Ellin6076)).